The following is a 357-amino-acid chain: Cobalt-precorrin-5B C(1)-methyltransferase (357 aa).

The protein belongs to the CbiD family.

The catalysed reaction is Co-precorrin-5B + S-adenosyl-L-methionine = Co-precorrin-6A + S-adenosyl-L-homocysteine. Its pathway is cofactor biosynthesis; adenosylcobalamin biosynthesis; cob(II)yrinate a,c-diamide from sirohydrochlorin (anaerobic route): step 6/10. In terms of biological role, catalyzes the methylation of C-1 in cobalt-precorrin-5B to form cobalt-precorrin-6A. The chain is Cobalt-precorrin-5B C(1)-methyltransferase from Gloeobacter violaceus (strain ATCC 29082 / PCC 7421).